A 166-amino-acid chain; its full sequence is Large ribosomal subunit protein mL41 (166 aa).

The N-terminal 26 residues, 1-26, are a transit peptide targeting the mitochondrion; sequence MNNCIKVVPIALRCQQRTISTSSVLE. Residues 136–166 are disordered; that stretch reads KDGSAKEPSVNEQLTPEEALQRARKTGSDIF.

It belongs to the mitochondrion-specific ribosomal protein mL41 family. As to quaternary structure, component of the mitochondrial ribosome large subunit (39S) which comprises a 16S rRNA and about 50 distinct proteins.

It is found in the mitochondrion. This is Large ribosomal subunit protein mL41 (mRpL41) from Drosophila melanogaster (Fruit fly).